The chain runs to 264 residues: Type III pantothenate kinase (264 aa).

6-13 (DIGNTQTV) contacts ATP. Residues Y100 and 107 to 110 (GADR) each bind substrate. D109 serves as the catalytic Proton acceptor. K(+) is bound at residue D129. T132 serves as a coordination point for ATP. T185 contacts substrate.

It belongs to the type III pantothenate kinase family. As to quaternary structure, homodimer. NH4(+) is required as a cofactor. The cofactor is K(+).

The protein resides in the cytoplasm. It catalyses the reaction (R)-pantothenate + ATP = (R)-4'-phosphopantothenate + ADP + H(+). It participates in cofactor biosynthesis; coenzyme A biosynthesis; CoA from (R)-pantothenate: step 1/5. Catalyzes the phosphorylation of pantothenate (Pan), the first step in CoA biosynthesis. The protein is Type III pantothenate kinase of Rubrobacter xylanophilus (strain DSM 9941 / JCM 11954 / NBRC 16129 / PRD-1).